The following is a 491-amino-acid chain: Neuronal acetylcholine receptor subunit beta-2 (491 aa).

A signal peptide spans 1–18; sequence MALLRVLCLLAALRRSLC. The Extracellular segment spans residues 19 to 226; sequence TDTEERLVEY…ITYDFIIRRK (208 aa). N-linked (GlcNAc...) asparagine glycosylation is found at Asn44 and Asn161. Cysteines 148 and 162 form a disulfide. The chain crosses the membrane as a helical span at residues 227-251; it reads PLFYTINLIIPCILITSLAILVFYL. Topologically, residues 252–258 are cytoplasmic; the sequence is PSDCGEK. Residues 259 to 277 form a helical membrane-spanning segment; that stretch reads MTLCISVLLALTVFLLLIS. At 278-292 the chain is on the extracellular side; the sequence is KIVPPTSLDVPLVGK. The chain crosses the membrane as a helical span at residues 293–314; sequence YLMFTMVLVTFSIVTSVCVLNV. Residues 315 to 449 are Cytoplasmic-facing; sequence HHRSPTTHTM…WKYVAMVIDR (135 aa). Residues 450–468 form a helical membrane-spanning segment; it reads LFLWIFVFVCVFGTVGMFL.

It belongs to the ligand-gated ion channel (TC 1.A.9) family. Acetylcholine receptor (TC 1.A.9.1) subfamily. Beta-2/CHRNB2 sub-subfamily. Neuronal AChR is a heteropentamer composed of two different types of subunits: alpha and beta. CHRNB2/Beta-2 subunit can be combined to CHRNA2/alpha-2, CHRNA3/alpha-3 or CHRNA4/alpha-4, CHRNA5/alpha-5, CHRNA6/alpha-6 and CHRNB3/beta-3 to give rise to functional receptors.

Its subcellular location is the synaptic cell membrane. The protein localises to the cell membrane. The catalysed reaction is Ca(2+)(in) = Ca(2+)(out). The enzyme catalyses K(+)(in) = K(+)(out). It catalyses the reaction Na(+)(in) = Na(+)(out). With respect to regulation, activated by a myriad of ligands such as acetylcholine, cytisine, nicotine, choline and epibatidine. nAChR activity is inhibited by the antagonist alpha-conotoxins BuIA, PnIA, PnIC, GID and MII, small disulfide-constrained peptides from cone snails. Its function is as follows. Component of neuronal acetylcholine receptors (nAChRs) that function as pentameric, ligand-gated cation channels with high calcium permeability among other activities. nAChRs are excitatory neurotrasnmitter receptors formed by a collection of nAChR subunits known to mediate synaptic transmission in the nervous system and the neuromuscular junction. Each nAchR subunit confers differential attributes to channel properties, including activation, deactivation and desensitization kinetics, pH sensitivity, cation permeability, and binding to allosteric modulators. CHRNB2 forms heteropentameric neuronal acetylcholine receptors with CHRNA2, CHRNA3, CHRNA4 and CHRNA6, as well as CHRNA5 and CHRNB3 as accesory subunits. The polypeptide is Neuronal acetylcholine receptor subunit beta-2 (CHRNB2) (Gallus gallus (Chicken)).